A 321-amino-acid chain; its full sequence is Glucokinase (321 aa).

An ATP-binding site is contributed by 8–13 (GDVGGT).

The protein belongs to the bacterial glucokinase family.

It is found in the cytoplasm. The enzyme catalyses D-glucose + ATP = D-glucose 6-phosphate + ADP + H(+). The sequence is that of Glucokinase from Salmonella schwarzengrund (strain CVM19633).